The sequence spans 453 residues: Cytochrome P450 monooxygenase CYP2 (453 aa).

The helical transmembrane segment at 13-29 (MVITMLHGSSTYSLLAS) threads the bilayer. N-linked (GlcNAc...) asparagine glycosylation occurs at N85. Residue C397 participates in heme binding.

The protein belongs to the cytochrome P450 family. It depends on heme as a cofactor.

It is found in the membrane. Its pathway is secondary metabolite biosynthesis. In terms of biological role, cytochrome P450 monooxygenase; part of the gene cluster that mediates the biosynthesis of a tyrosine-derived cytochalasan acting as a fungal signal recognized by resistant rice plants and leads to avirulence in Pi33 resistant rice cultivars. The first step in the pathway is catalyzed by the hybrid PKS-NRPS ACE1, assisted by the enoyl reductase RAP1, that are responsible for fusion of the tyrosine precursor and the polyketide backbone. The polyketide synthase module (PKS) of ACE1 is responsible for the synthesis of the polyketide backbone and the downstream nonribosomal peptide synthetase (NRPS) amidates the carboxyl end of the polyketide with the tyrosine precursor. Because ACE1 lacks a designated enoylreductase (ER) domain, the required activity is provided the enoyl reductase RAP1. Reduction by the hydrolyase ORFZ, followed by dehydration and intra-molecular Diels-Alder cyclization by the Diels-Alderase ORF3 then yield the required isoindolone-fused macrocycle. A number of oxidative steps catalyzed by the tailoring enzymes identified within the cluster, including cytochrome P450 monooxygenases CYP1 to CYP4, the FAD-linked oxidoreductase OXR2 and the short-chain dehydrogenase/reductase OXR1, are further required to afford the final cytochalasans that confer avirulence and which have still to be identified. The monooxygenase CYP1 has been shown to be a site-selective C-18 hydroxylase whereas the function of CYP3 is the site-selective epoxidation of the C-6/C-7 olefin that is present in some intermediate compounds. Finally, SYN2 and RAP2 are not required for avirulence in Pi33 resistant rice cultivars. The sequence is that of Cytochrome P450 monooxygenase CYP2 from Pyricularia oryzae (strain 70-15 / ATCC MYA-4617 / FGSC 8958) (Rice blast fungus).